We begin with the raw amino-acid sequence, 193 residues long: AP-3 complex subunit sigma-1 (193 aa).

Serine 191 carries the phosphoserine modification.

The protein belongs to the adaptor complexes small subunit family. As to quaternary structure, adaptor protein complex 3 (AP-3) is a heterotetramer composed of two large adaptins (delta-type subunit AP3D1 and beta-type subunit AP3B1 or AP3B2), a medium adaptin (mu-type subunit AP3M1 or AP3M2) and a small adaptin (sigma-type subunit APS1 or AP3S2). Interacts with AGAP1. AP-3 associates with the BLOC-1 complex.

It localises to the golgi apparatus. The protein resides in the cytoplasmic vesicle membrane. Its function is as follows. Part of the AP-3 complex, an adaptor-related complex which is not clathrin-associated. The complex is associated with the Golgi region as well as more peripheral structures. It facilitates the budding of vesicles from the Golgi membrane and may be directly involved in trafficking to lysosomes. In concert with the BLOC-1 complex, AP-3 is required to target cargos into vesicles assembled at cell bodies for delivery into neurites and nerve terminals. This Bos taurus (Bovine) protein is AP-3 complex subunit sigma-1 (AP3S1).